Consider the following 910-residue polypeptide: MINSLLTRVFGSRNERQLRQLNRIVAKINALEPEIEKLSDEQLQAKTPEFKQRIADGEALDKVLPEAFAVCREAGRRVLGMRHYDVQLIGGMVLHLGKIAEMRTGEGKTLVATLPVYLNALEGKGVHVVTVNDYLARRDAAQMGKLYNWLGLSVGVVYPGMPHSDKREAYAADITYGTNNEFGFDYLRDNMALSKADRYQRGLHYAIVDEVDSILIDEARTPLIISGPADDSPELYIRVNRVVPHLVKQEAEDGEGDFWVDEKGKQVHLSEAGMEHAEQLLVEAGILNGETEGLYAAQNLTVVHHLNAALRAHAIYQRDVDYIVRDGEVVIVDEFTGRTLAGRRWSDGLHQAVEAKEGVPVQRENQTLASITFQNLFRMYKKLSGMTGTADTEAFEFQSIYGLEVVVIPTNRPTIRKDSPDQVFLNRKGKFNAVLADIEECAKRGQPVLVGTTSIETSEMLSEHLSKAGVKHEVLNAKQHDREATIVANAGRPGAVTIATNMAGRGTDIVLGGSLEAELHALGEDATDEQKAAVKADWQKRHEAVKAAGGLHIVGTERHESRRIDNQLRGRSGRQGDPGSSRFYLALEDNLLRVFGGERVQKMMRMMGMKEEDVIEDRLVTRMIEKSQRKVEAHNFDIRKNLLDFDDVNNDQRKVIYAQRDELLDAESVKDNVDGIRDDVIFDVVARFVPPNSIDEQWDLRGLEATLESDFGLQMSLTDLVKEHEELDAEAIAAKVQERVNQHFAEKEASVGEETMRALEKHVMLTVLDQSWKEHLARMDYLRQGIYLRGYAQKQPKQEYKKEAFELFSDMLENVKREVVTLLSRVRIRSDEEVQALEAAERQQAEARLSQSQFQHQDVGGYSADEEAAQVQAAQQGVAQMQRDEPKIGRNDPCPCGSGKKYKHCHGQLS.

ATP-binding positions include glutamine 87, 105–109 (GEGKT), and aspartate 508. The segment at 848–910 (RLSQSQFQHQ…KYKHCHGQLS (63 aa)) is disordered. Residues 869–880 (AQVQAAQQGVAQ) show a composition bias toward low complexity. Cysteine 894, cysteine 896, cysteine 905, and histidine 906 together coordinate Zn(2+). Positions 900-910 (KKYKHCHGQLS) are enriched in basic residues.

It belongs to the SecA family. Monomer and homodimer. Part of the essential Sec protein translocation apparatus which comprises SecA, SecYEG and auxiliary proteins SecDF-YajC and YidC. The cofactor is Zn(2+).

The protein resides in the cell inner membrane. It localises to the cytoplasm. It carries out the reaction ATP + H2O + cellular proteinSide 1 = ADP + phosphate + cellular proteinSide 2.. In terms of biological role, part of the Sec protein translocase complex. Interacts with the SecYEG preprotein conducting channel. Has a central role in coupling the hydrolysis of ATP to the transfer of proteins into and across the cell membrane, serving both as a receptor for the preprotein-SecB complex and as an ATP-driven molecular motor driving the stepwise translocation of polypeptide chains across the membrane. This is Protein translocase subunit SecA from Stenotrophomonas maltophilia (strain K279a).